The sequence spans 242 residues: Segregation and condensation protein A (242 aa).

Belongs to the ScpA family. Component of a cohesin-like complex composed of ScpA, ScpB and the Smc homodimer, in which ScpA and ScpB bind to the head domain of Smc. The presence of the three proteins is required for the association of the complex with DNA.

The protein resides in the cytoplasm. In terms of biological role, participates in chromosomal partition during cell division. May act via the formation of a condensin-like complex containing Smc and ScpB that pull DNA away from mid-cell into both cell halves. The chain is Segregation and condensation protein A from Streptococcus pneumoniae serotype 2 (strain D39 / NCTC 7466).